Reading from the N-terminus, the 228-residue chain is Flagellar L-ring protein (228 aa).

The N-terminal stretch at 1-17 (MHYLRYFAIAFLLLLSS) is a signal peptide. The N-palmitoyl cysteine moiety is linked to residue cysteine 18. Cysteine 18 carries the S-diacylglycerol cysteine lipid modification.

Belongs to the FlgH family. As to quaternary structure, the basal body constitutes a major portion of the flagellar organelle and consists of four rings (L,P,S, and M) mounted on a central rod.

It is found in the cell membrane. The protein localises to the bacterial flagellum basal body. Its function is as follows. Assembles around the rod to form the L-ring and probably protects the motor/basal body from shearing forces during rotation. This is Flagellar L-ring protein from Wigglesworthia glossinidia brevipalpis.